Reading from the N-terminus, the 543-residue chain is Putative inorganic phosphate export protein YjbB (543 aa).

9 helical membrane passes run 1 to 21 (MLTL…THIV), 48 to 68 (FCAG…TMLV), 76 to 96 (LVAL…TALM), 99 to 119 (ILTF…VIFF), 134 to 154 (GIGL…VTPI), 175 to 195 (ALIG…VLLT), 196 to 216 (ATLT…VIGA), 240 to 260 (LGSL…VHLL), and 274 to 294 (LVIY…LPFV).

It belongs to the YjbB family.

The protein localises to the cell inner membrane. The catalysed reaction is phosphate(in) = phosphate(out). In terms of biological role, might be involved in phosphate export. Overproduction of YjbB reduces the elevated levels of polyphosphate (polyP) in a phoU mutant that accumulates 1000-fold higher levels of polyP than the wild type, suggesting that YjbB exports excess intracellular phosphate (Pi) in the phoU mutant and thus reduces the levels of polyP. This is Putative inorganic phosphate export protein YjbB (yjbB) from Escherichia coli (strain K12).